We begin with the raw amino-acid sequence, 421 residues long: Succinate--CoA ligase [ADP-forming] subunit beta, mitochondrial (421 aa).

A mitochondrion-targeting transit peptide spans 1-26 (MRGLVNKLVSRSLSISGKWQNQQLRR). Positions 35-278 (AELMGKYGVN…PTQEDPREVA (244 aa)) constitute an ATP-grasp domain. ATP-binding positions include K74, 81-83 (GRG), and E141. Residues N233 and D247 each coordinate Mg(2+). Substrate-binding positions include N298 and 355–357 (GIM).

The protein belongs to the succinate/malate CoA ligase beta subunit family. Heterodimer of an alpha and a beta subunit. It depends on Mg(2+) as a cofactor.

It localises to the mitochondrion. The catalysed reaction is succinate + ATP + CoA = succinyl-CoA + ADP + phosphate. The protein operates within carbohydrate metabolism; tricarboxylic acid cycle; succinate from succinyl-CoA (ligase route): step 1/1. Functionally, succinyl-CoA synthetase functions in the citric acid cycle (TCA), coupling the hydrolysis of succinyl-CoA to the synthesis of ATP and thus represents the only step of substrate-level phosphorylation in the TCA. The beta subunit provides nucleotide specificity of the enzyme and binds the substrate succinate, while the binding sites for coenzyme A and phosphate are found in the alpha subunit. This Arabidopsis thaliana (Mouse-ear cress) protein is Succinate--CoA ligase [ADP-forming] subunit beta, mitochondrial.